Reading from the N-terminus, the 796-residue chain is Vacuolar protein sorting-associated protein 35 (796 aa).

Residue S7 is modified to Phosphoserine. 2 interaction with SNX3 regions span residues 25–44 and 205–215; these read VQSF…DALK and DREKRERERQE. The interaction with SLC11A2 stretch occupies residues 438 to 796; it reads CYVLSNVLDY…EGPIYEGLIL (359 aa). Positions 500 to 693 are interaction with IGF2R cytoplasmic domain; sequence SEDPDQQYLI…DKNGEELHGG (194 aa). A Phosphoserine modification is found at S783. Y791 carries the phosphotyrosine modification.

Belongs to the VPS35 family. Component of the heterotrimeric retromer cargo-selective complex (CSC), also decribed as vacuolar protein sorting subcomplex (VPS), formed by VPS26 (VPS26A or VPS26B), VPS29 and VPS35. The CSC has a highly elongated structure with VPS26 and VPS29 binding independently at opposite distal ends of VPS35 as central platform. The CSC is believed to associate with variable sorting nexins to form functionally distinct retromer complex variants. The originally described retromer complex (also called SNX-BAR retromer) is a pentamer containing the CSC and a heterodimeric membrane-deforming subcomplex formed between SNX1 or SNX2 and SNX5 or SNX6 (also called SNX-BAR subcomplex); the respective CSC and SNX-BAR subcomplexes associate with low affinity. The CSC associates with SNX3 to form a SNX3-retromer complex. The CSC associates with SNX27, the WASH complex and the SNX-BAR subcomplex to form the SNX27-retromer complex. Interacts with VPS26A, VPS26B, VPS29, SNX1, SNX2, IGF2R, SNX3, GOLPH3, LRRK2, SLC11A2, WASHC2A, WASHC2C, FKBP15, WASHC1, RAB7A, SNX27, WASHC5, EHD1. Interacts with MAGEL2; leading to recruitment of the TRIM27:MAGEL2 E3 ubiquitin ligase complex retromer-containing endosomes. Interacts with SORCS2. In terms of assembly, (Microbial infection) Interacts with human papillomavirus 16 minor capsid protein L2 (via C-terminus); this interaction mediates the transport of the capsid from the early endosome to the Golgi apparatus. Ubiquitous. Highly expressed in heart, brain, placenta, skeletal muscle, spleen, thymus, testis, ovary, small intestine, kidney and colon.

It localises to the cytoplasm. The protein localises to the membrane. Its subcellular location is the endosome. The protein resides in the early endosome. It is found in the late endosome. In terms of biological role, acts as a component of the retromer cargo-selective complex (CSC). The CSC is believed to be the core functional component of retromer or respective retromer complex variants acting to prevent missorting of selected transmembrane cargo proteins into the lysosomal degradation pathway. The recruitment of the CSC to the endosomal membrane involves RAB7A and SNX3. The CSC seems to associate with the cytoplasmic domain of cargo proteins predominantly via VPS35; however, these interactions seem to be of low affinity and retromer SNX proteins may also contribute to cargo selectivity thus questioning the classical function of the CSC. The SNX-BAR retromer mediates retrograde transport of cargo proteins from endosomes to the trans-Golgi network (TGN) and is involved in endosome-to-plasma membrane transport for cargo protein recycling. The SNX3-retromer mediates the retrograde endosome-to-TGN transport of WLS distinct from the SNX-BAR retromer pathway. The SNX27-retromer is believed to be involved in endosome-to-plasma membrane trafficking and recycling of a broad spectrum of cargo proteins. The CSC seems to act as recruitment hub for other proteins, such as the WASH complex and TBC1D5. Required for retrograde transport of lysosomal enzyme receptor IGF2R and SLC11A2. Required to regulate transcytosis of the polymeric immunoglobulin receptor (pIgR-pIgA). Required for endosomal localization of WASHC2C. Mediates the association of the CSC with the WASH complex via WASHC2. Required for the endosomal localization of TBC1D5. (Microbial infection) The heterotrimeric retromer cargo-selective complex (CSC) mediates the exit of human papillomavirus from the early endosome and the delivery to the Golgi apparatus. This Homo sapiens (Human) protein is Vacuolar protein sorting-associated protein 35.